The primary structure comprises 671 residues: tRNA 5-methylaminomethyl-2-thiouridine biosynthesis bifunctional protein MnmC (671 aa).

Residues 1–245 form a tRNA (mnm(5)s(2)U34)-methyltransferase region; it reads MVNVMNTLSF…KREMLWGEKP (245 aa). The FAD-dependent cmnm(5)s(2)U34 oxidoreductase stretch occupies residues 272 to 671; sequence VGGGVASLFV…RKLLKGSKVE (400 aa).

In the N-terminal section; belongs to the methyltransferase superfamily. tRNA (mnm(5)s(2)U34)-methyltransferase family. The protein in the C-terminal section; belongs to the DAO family. The cofactor is FAD.

It is found in the cytoplasm. The enzyme catalyses 5-aminomethyl-2-thiouridine(34) in tRNA + S-adenosyl-L-methionine = 5-methylaminomethyl-2-thiouridine(34) in tRNA + S-adenosyl-L-homocysteine + H(+). Catalyzes the last two steps in the biosynthesis of 5-methylaminomethyl-2-thiouridine (mnm(5)s(2)U) at the wobble position (U34) in tRNA. Catalyzes the FAD-dependent demodification of cmnm(5)s(2)U34 to nm(5)s(2)U34, followed by the transfer of a methyl group from S-adenosyl-L-methionine to nm(5)s(2)U34, to form mnm(5)s(2)U34. The chain is tRNA 5-methylaminomethyl-2-thiouridine biosynthesis bifunctional protein MnmC from Actinobacillus pleuropneumoniae serotype 5b (strain L20).